Here is a 101-residue protein sequence, read N- to C-terminus: Large ribosomal subunit protein uL24 (101 aa).

It belongs to the universal ribosomal protein uL24 family. Part of the 50S ribosomal subunit.

Functionally, one of two assembly initiator proteins, it binds directly to the 5'-end of the 23S rRNA, where it nucleates assembly of the 50S subunit. One of the proteins that surrounds the polypeptide exit tunnel on the outside of the subunit. In Jannaschia sp. (strain CCS1), this protein is Large ribosomal subunit protein uL24.